Here is a 460-residue protein sequence, read N- to C-terminus: Solute carrier family 52, riboflavin transporter, member 3 (460 aa).

The Cytoplasmic segment spans residues 1 to 6; sequence MAFLTH. A helical membrane pass occupies residues 7–27; that stretch reads LLVCVFGMGSWVAINGLWVEL. Over 28 to 37 the chain is Extracellular; the sequence is PLLVTELPEA. A helical membrane pass occupies residues 38–58; it reads WYLPSYLTVVIQLANIGPLLV. The Cytoplasmic portion of the chain corresponds to 59 to 71; it reads TLMHRFRPGCLSE. Residues 72-92 form a helical membrane-spanning segment; sequence VPVIFLILCVGTAACILLAFL. Residues 93-105 lie on the Extracellular side of the membrane; it reads WNVTSWIQGGQHS. N-linked (GlcNAc...) asparagine glycosylation is present at N94. Residues 106–126 traverse the membrane as a helical segment; it reads VAFIVLTFFLALVDCTSSVTF. Residues 127–137 lie on the Cytoplasmic side of the membrane; that stretch reads LPFMSQLPTYY. A helical membrane pass occupies residues 138 to 158; sequence LTTFFIGEGLSGLLPALVALV. The Extracellular segment spans residues 159 to 211; that stretch reads QGSGITTCVNVTETPGTTLNTMETPITQGNLSPSLPSPSWHQESRYLAPRFSP. N168 carries N-linked (GlcNAc...) asparagine glycosylation. A helical transmembrane segment spans residues 212–232; that stretch reads LLFFLLLSFLTGCCLVAFFLL. At 233-291 the chain is on the cytoplasmic side; that stretch reads QRQPWGRQGSIEDLLHSQVTLHSIRPRDTEDTSSLGAPVSSPGKGSVEASVASLRPAQL. Phosphoserine occurs at positions 242 and 266. The chain crosses the membrane as a helical span at residues 292 to 312; it reads AFIYSVVAFVNALTNGVLPSV. The Extracellular portion of the chain corresponds to 313–326; the sequence is QTYSCLPYGPVAYH. A helical transmembrane segment spans residues 327–347; sequence LSATLSSVASPLACFLPIFLP. Over 348–350 the chain is Cytoplasmic; sequence NRS. The chain crosses the membrane as a helical span at residues 351-371; sequence LLFLGVLTVLGTGFGAYNMAM. Over 372–387 the chain is Extracellular; sequence AAMSPCPVLQGHWGGE. A disulfide bridge links C377 with C454. The helical transmembrane segment at 388–408 threads the bilayer; that stretch reads VLIVLSWVLFAACLSYVKVML. Residues 409–418 are Cytoplasmic-facing; sequence GVILRDRSRS. A helical membrane pass occupies residues 419–439; sequence ALLWCGAAVQLGSLIGALLMF. Over 440–460 the chain is Extracellular; sequence PLVNVLKLFSSADYCSLDCSV.

This sequence belongs to the riboflavin transporter family. As to expression, within the small intestine, it is particularly expressed in the jujenum and the ileum. Almost negligible expression in the stomach, duodenum, and large intestine.

The protein localises to the cell membrane. The enzyme catalyses riboflavin(in) = riboflavin(out). In terms of biological role, plasma membrane transporter mediating the uptake by cells of the water soluble vitamin B2/riboflavin that plays a key role in biochemical oxidation-reduction reactions of the carbohydrate, lipid, and amino acid metabolism. This Mus musculus (Mouse) protein is Solute carrier family 52, riboflavin transporter, member 3 (Slc52a3).